We begin with the raw amino-acid sequence, 270 residues long: Extracellular metalloprotease MCYG_04966 (270 aa).

An N-terminal signal peptide occupies residues 1 to 19 (MRLSLFLSGLAAAGSIVSA). A glycan (N-linked (GlcNAc...) asparagine) is linked at Asn-135. His-184 is a Zn(2+) binding site. Residue Glu-185 is part of the active site. Residue His-188 coordinates Zn(2+). N-linked (GlcNAc...) asparagine glycosylation is present at Asn-199. The interval 208 to 227 (VADTPPQSKKTSGCPNSQDS) is disordered. The segment covering 212-227 (PPQSKKTSGCPNSQDS) has biased composition (polar residues). The cysteines at positions 221 and 247 are disulfide-linked.

Belongs to the peptidase M43B family.

It localises to the secreted. Its function is as follows. Secreted metalloproteinase that allows assimilation of proteinaceous substrates. Plays a pivotal role as a pathogenicity determinant during infections and contributes to the ability of the pathogen to persist within the mammalian host. The polypeptide is Extracellular metalloprotease MCYG_04966 (Arthroderma otae (strain ATCC MYA-4605 / CBS 113480) (Microsporum canis)).